A 493-amino-acid chain; its full sequence is Galactose-1-phosphate uridylyltransferase 2 (493 aa).

This sequence belongs to the galactose-1-phosphate uridylyltransferase type 2 family.

It is found in the cytoplasm. It catalyses the reaction alpha-D-galactose 1-phosphate + UDP-alpha-D-glucose = alpha-D-glucose 1-phosphate + UDP-alpha-D-galactose. Its pathway is carbohydrate metabolism; galactose metabolism. The protein is Galactose-1-phosphate uridylyltransferase 2 (galT2) of Streptococcus pneumoniae (strain ATCC BAA-255 / R6).